The following is an 840-amino-acid chain: Translation initiation factor IF-2 (840 aa).

Residues 95–143 (RSPDEIEAERQRELEEQRAAEEAERLKAEEAAARQRAEEEARKAEEAAR) are compositionally biased toward basic and acidic residues. Disordered regions lie at residues 95–155 (RSPD…ATAG) and 173–256 (PAAV…PTGP). The segment covering 144-155 (AKAAQEAAATAG) has biased composition (low complexity). Basic and acidic residues-rich tracts occupy residues 175 to 191 (AVEE…PKRD) and 223 to 232 (STDEESDGYR). Positions 233 to 247 (RGGRGGKSKLKKRNQ) are enriched in basic residues. One can recognise a tr-type G domain in the interval 340-509 (TRAPVVTVMG…LLQAEVLELK (170 aa)). The tract at residues 349–356 (GHVDHGKT) is G1. A GTP-binding site is contributed by 349-356 (GHVDHGKT). A G2 region spans residues 374 to 378 (GITQH). A G3 region spans residues 395-398 (DTPG). GTP-binding positions include 395–399 (DTPGH) and 449–452 (NKID). A G4 region spans residues 449-452 (NKID). Residues 485–487 (SAK) form a G5 region.

The protein belongs to the TRAFAC class translation factor GTPase superfamily. Classic translation factor GTPase family. IF-2 subfamily.

Its subcellular location is the cytoplasm. In terms of biological role, one of the essential components for the initiation of protein synthesis. Protects formylmethionyl-tRNA from spontaneous hydrolysis and promotes its binding to the 30S ribosomal subunits. Also involved in the hydrolysis of GTP during the formation of the 70S ribosomal complex. The sequence is that of Translation initiation factor IF-2 from Pseudomonas aeruginosa (strain ATCC 15692 / DSM 22644 / CIP 104116 / JCM 14847 / LMG 12228 / 1C / PRS 101 / PAO1).